The sequence spans 1358 residues: Phosphoinositide 3-kinase regulatory subunit 4 (1358 aa).

Gly-2 carries the N-myristoyl glycine lipid modification. The Protein kinase domain occupies 26–324 (FEYDKSLGST…AFPEIFYTFL (299 aa)). Residues 32-40 (LGSTRFFKV) and Lys-53 each bind ATP. The Proton acceptor role is filled by Asp-148. HEAT repeat units follow at residues 413–450 (ILLD…LVQE), 458–495 (IYPE…TALR), 572–610 (KAND…YVGW), and 612–648 (SSSI…LGLL). Phosphoserine is present on residues Ser-808, Ser-813, Ser-853, and Ser-865. WD repeat units lie at residues 991-1030 (EHKS…GKTT), 1040-1079 (RIGG…LPKS), 1093-1134 (KEDG…NAWT), 1139-1178 (LKSG…PISS), 1182-1223 (PSRA…RRLT), and 1237-1278 (PSPH…RSYV). Residues 1307–1326 (KQKVGPSDDTPRRGPESLPV) form a disordered region. The span at 1315-1326 (DTPRRGPESLPV) shows a compositional bias: basic and acidic residues. A Phosphothreonine modification is found at Thr-1316. The stretch at 1327–1358 (GHHDIITDIATFQTTQGFIVTASRDGIVKVWK) is one WD 7 repeat.

The protein belongs to the protein kinase superfamily. Ser/Thr protein kinase family. In terms of assembly, component of the PI3K (PI3KC3/PI3K-III/class III phosphatidylinositol 3-kinase) complex the core of which is composed of the catalytic subunit PIK3C3, the regulatory subunit PIK3R4 and BECN1 associating with additional regulatory/auxiliary subunits to form alternative complex forms. Alternative complex forms containing a fourth regulatory subunit in a mutually exclusive manner are PI3K complex I (PI3KC3-C1) containing ATG14, and PI3K complex II (PI3KC3-C2) containing UVRAG. PI3KC3-C1 displays a V-shaped architecture with PIK3R4 serving as a bridge between PIK3C3 and the ATG14:BECN1 subcomplex. Both, PI3KC3-C1 and PI3KC3-C2, can associate with further regulatory subunits, such as RUBCN, SH3GLB1/Bif-1, AMBRA1 and NRBF2. PI3KC3-C1 probably associates with PIK3CB. Interacts with RAB7A in the presence of PIK3C3/VPS34. Interacts with NRBF2. Interacts with ARMC3. Requires Mn(2+) as cofactor. In terms of processing, myristoylated. Probably autophosphorylated.

It is found in the late endosome. The protein localises to the cytoplasmic vesicle. It localises to the autophagosome. Its subcellular location is the membrane. The catalysed reaction is L-seryl-[protein] + ATP = O-phospho-L-seryl-[protein] + ADP + H(+). The enzyme catalyses L-threonyl-[protein] + ATP = O-phospho-L-threonyl-[protein] + ADP + H(+). Functionally, regulatory subunit of the PI3K complex that mediates formation of phosphatidylinositol 3-phosphate; different complex forms are believed to play a role in multiple membrane trafficking pathways: PI3KC3-C1 is involved in initiation of autophagosomes and PI3KC3-C2 in maturation of autophagosomes and endocytosis. Involved in regulation of degradative endocytic trafficking and cytokinesis, probably in the context of PI3KC3-C2. This is Phosphoinositide 3-kinase regulatory subunit 4 (Pik3r4) from Mus musculus (Mouse).